The primary structure comprises 265 residues: Protein Pars_0096 (265 aa).

The protein belongs to the CinA family.

This is Protein Pars_0096 from Pyrobaculum arsenaticum (strain DSM 13514 / JCM 11321 / PZ6).